The following is a 145-amino-acid chain: UPF0179 protein MmarC7_0952 (145 aa).

It belongs to the UPF0179 family.

The sequence is that of UPF0179 protein MmarC7_0952 from Methanococcus maripaludis (strain C7 / ATCC BAA-1331).